Here is a 366-residue protein sequence, read N- to C-terminus: Beta sliding clamp (366 aa).

It belongs to the beta sliding clamp family. As to quaternary structure, forms a ring-shaped head-to-tail homodimer around DNA which binds and tethers DNA polymerases and other proteins to the DNA. The DNA replisome complex has a single clamp-loading complex (3 tau and 1 each of delta, delta', psi and chi subunits) which binds 3 Pol III cores (1 core on the leading strand and 2 on the lagging strand) each with a beta sliding clamp dimer. Additional proteins in the replisome are other copies of gamma, psi and chi, Ssb, DNA helicase and RNA primase.

The protein resides in the cytoplasm. Confers DNA tethering and processivity to DNA polymerases and other proteins. Acts as a clamp, forming a ring around DNA (a reaction catalyzed by the clamp-loading complex) which diffuses in an ATP-independent manner freely and bidirectionally along dsDNA. Initially characterized for its ability to contact the catalytic subunit of DNA polymerase III (Pol III), a complex, multichain enzyme responsible for most of the replicative synthesis in bacteria; Pol III exhibits 3'-5' exonuclease proofreading activity. The beta chain is required for initiation of replication as well as for processivity of DNA replication. The polypeptide is Beta sliding clamp (dnaN) (Salmonella typhimurium (strain LT2 / SGSC1412 / ATCC 700720)).